Consider the following 282-residue polypeptide: Lipoyl synthase (282 aa).

The [4Fe-4S] cluster site is built by Cys-37, Cys-42, Cys-48, Cys-63, Cys-67, Cys-70, and Ser-274. The 215-residue stretch at 49 to 263 folds into the Radical SAM core domain; the sequence is WGKGTATFMI…KTIGLEKGFS (215 aa).

It belongs to the radical SAM superfamily. Lipoyl synthase family. [4Fe-4S] cluster serves as cofactor.

It is found in the cytoplasm. It catalyses the reaction [[Fe-S] cluster scaffold protein carrying a second [4Fe-4S](2+) cluster] + N(6)-octanoyl-L-lysyl-[protein] + 2 oxidized [2Fe-2S]-[ferredoxin] + 2 S-adenosyl-L-methionine + 4 H(+) = [[Fe-S] cluster scaffold protein] + N(6)-[(R)-dihydrolipoyl]-L-lysyl-[protein] + 4 Fe(3+) + 2 hydrogen sulfide + 2 5'-deoxyadenosine + 2 L-methionine + 2 reduced [2Fe-2S]-[ferredoxin]. It functions in the pathway protein modification; protein lipoylation via endogenous pathway; protein N(6)-(lipoyl)lysine from octanoyl-[acyl-carrier-protein]: step 2/2. Functionally, catalyzes the radical-mediated insertion of two sulfur atoms into the C-6 and C-8 positions of the octanoyl moiety bound to the lipoyl domains of lipoate-dependent enzymes, thereby converting the octanoylated domains into lipoylated derivatives. The chain is Lipoyl synthase from Bacteroides thetaiotaomicron (strain ATCC 29148 / DSM 2079 / JCM 5827 / CCUG 10774 / NCTC 10582 / VPI-5482 / E50).